Reading from the N-terminus, the 371-residue chain is Bifunctional enzyme IspD/IspF (371 aa).

A 2-C-methyl-D-erythritol 4-phosphate cytidylyltransferase region spans residues 1–212 (MLDISLIMLG…CLIPPSNEHF (212 aa)). The 2-C-methyl-D-erythritol 2,4-cyclodiphosphate synthase stretch occupies residues 212–371 (FTGIGFDAHE…ANLKYYDWTK (160 aa)). A divalent metal cation is bound by residues Asp-218 and His-220. 4-CDP-2-C-methyl-D-erythritol 2-phosphate contacts are provided by residues 218–220 (DAH) and 244–245 (HS). His-252 provides a ligand contact to a divalent metal cation. 4-CDP-2-C-methyl-D-erythritol 2-phosphate-binding positions include 266–268 (DIG), 271–275 (FPDTD), 342–345 (TTTE), Phe-349, and Arg-352.

In the N-terminal section; belongs to the IspD/TarI cytidylyltransferase family. IspD subfamily. This sequence in the C-terminal section; belongs to the IspF family. A divalent metal cation is required as a cofactor.

It carries out the reaction 2-C-methyl-D-erythritol 4-phosphate + CTP + H(+) = 4-CDP-2-C-methyl-D-erythritol + diphosphate. It catalyses the reaction 4-CDP-2-C-methyl-D-erythritol 2-phosphate = 2-C-methyl-D-erythritol 2,4-cyclic diphosphate + CMP. It participates in isoprenoid biosynthesis; isopentenyl diphosphate biosynthesis via DXP pathway; isopentenyl diphosphate from 1-deoxy-D-xylulose 5-phosphate: step 2/6. Its pathway is isoprenoid biosynthesis; isopentenyl diphosphate biosynthesis via DXP pathway; isopentenyl diphosphate from 1-deoxy-D-xylulose 5-phosphate: step 4/6. In terms of biological role, bifunctional enzyme that catalyzes the formation of 4-diphosphocytidyl-2-C-methyl-D-erythritol from CTP and 2-C-methyl-D-erythritol 4-phosphate (MEP) (IspD), and catalyzes the conversion of 4-diphosphocytidyl-2-C-methyl-D-erythritol 2-phosphate (CDP-ME2P) to 2-C-methyl-D-erythritol 2,4-cyclodiphosphate (ME-CPP) with a corresponding release of cytidine 5-monophosphate (CMP) (IspF). In Campylobacter curvus (strain 525.92), this protein is Bifunctional enzyme IspD/IspF.